A 533-amino-acid polypeptide reads, in one-letter code: Probable nucleolar protein 5-2 (533 aa).

A Nop domain is found at 281 to 399; that stretch reads IAPNLTALVG…LEARLRNLEG (119 aa). Disordered regions lie at residues 401–433 and 445–533; these read DLGRLSGSSKGKPKIEVYNKDKKMGSGGLITPA and GETS…KSKD. A compositionally biased stretch (basic and acidic residues) spans 413–424; that stretch reads PKIEVYNKDKKM. Positions 521-533 are enriched in basic residues; the sequence is KKDKKEKKKKSKD.

It belongs to the NOP5/NOP56 family.

It localises to the nucleus. It is found in the nucleolus. Its function is as follows. Required for 60S ribosomal subunit biogenesis. In Arabidopsis thaliana (Mouse-ear cress), this protein is Probable nucleolar protein 5-2 (NOP5-2).